The chain runs to 927 residues: Translation initiation factor IF-2 (927 aa).

The disordered stretch occupies residues 27 to 337; that stretch reads LGLPVKSHAS…GAPKPVTERK (311 aa). The span at 49–69 shows a compositional bias: polar residues; sequence SFSSSKTKAPTNSVQTNQGVK. 2 stretches are compositionally biased toward basic and acidic residues: residues 70-86 and 101-138; these read TESK…DDKP and FKAE…DRRH. Positions 146-159 are enriched in low complexity; sequence GNRNDNRQGQQNNR. 3 stretches are compositionally biased toward basic and acidic residues: residues 160-171, 202-226, and 234-257; these read NKNDGRYADHKQ, YSRH…EQEL, and AQEE…KEIV. Residues 300–316 are compositionally biased toward low complexity; that stretch reads NWNNQNQVRNQRNSNWN. The tr-type G domain maps to 428–597; that stretch reads ERPPVVTIMG…LLVAEMEELK (170 aa). Positions 437–444 are G1; sequence GHVDHGKT. Residue 437–444 participates in GTP binding; the sequence is GHVDHGKT. Residues 462–466 form a G2 region; that stretch reads GITQH. Positions 483-486 are G3; the sequence is DTPG. Residues 483-487 and 537-540 contribute to the GTP site; these read DTPGH and NKID. Residues 537-540 are G4; that stretch reads NKID. A G5 region spans residues 573–575; sequence SAK.

This sequence belongs to the TRAFAC class translation factor GTPase superfamily. Classic translation factor GTPase family. IF-2 subfamily.

It localises to the cytoplasm. Its function is as follows. One of the essential components for the initiation of protein synthesis. Protects formylmethionyl-tRNA from spontaneous hydrolysis and promotes its binding to the 30S ribosomal subunits. Also involved in the hydrolysis of GTP during the formation of the 70S ribosomal complex. The polypeptide is Translation initiation factor IF-2 (Streptococcus agalactiae serotype V (strain ATCC BAA-611 / 2603 V/R)).